Here is a 142-residue protein sequence, read N- to C-terminus: Protein OrfX1 (142 aa).

This sequence belongs to the TULIP P47 family. As to quaternary structure, orfX1 was not detected as part of a crude toxin extract that includes BoNTA2/NTNH, P47, OrfX2 and OrfX3.

Functionally, part of a botulinum neurotoxin type A2 (BoNT) locus; may be part of a progenitor toxin complex required to protect BoNT during its passage through the host gastrointestinal tract. Binds phosphatidylinositol (3,4) bisphosphate, phosphatidylethanolamine and phosphatidylserine. The protein is Protein OrfX1 (orfX1) of Clostridium botulinum (strain Kyoto / Type A2).